Consider the following 241-residue polypeptide: Ribosome assembly factor mrt4 (241 aa).

This sequence belongs to the universal ribosomal protein uL10 family. As to quaternary structure, associates with the pre-60S ribosomal particle.

The protein localises to the nucleus. It localises to the nucleolus. The protein resides in the cytoplasm. Component of the ribosome assembly machinery. Nuclear paralog of the ribosomal protein P0, it binds pre-60S subunits at an early stage of assembly in the nucleolus, and is replaced by P0 in cytoplasmic pre-60S subunits and mature 80S ribosomes. The protein is Ribosome assembly factor mrt4 of Schizosaccharomyces pombe (strain 972 / ATCC 24843) (Fission yeast).